We begin with the raw amino-acid sequence, 426 residues long: Selenocysteine lyase (426 aa).

Residue Lys239 is modified to N6-(pyridoxal phosphate)lysine. The S-selanylcysteine intermediate role is filled by Cys367.

The protein belongs to the class-V pyridoxal-phosphate-dependent aminotransferase family. Homodimer. Requires pyridoxal 5'-phosphate as cofactor.

Its subcellular location is the cytoplasm. The protein localises to the cytosol. The catalysed reaction is L-selenocysteine + AH2 = hydrogenselenide + L-alanine + A + H(+). In terms of biological role, catalyzes the decomposition of L-selenocysteine to L-alanine and elemental selenium. The chain is Selenocysteine lyase (scly) from Xenopus laevis (African clawed frog).